A 505-amino-acid chain; its full sequence is MSEQHAQGADAVVDLNNELKTRREKLANLREQGIAFPNDFRRDHTSDQLHTEFDGKENEELEALNIEVAVAGRMMTRRIMGKASFVTLQDVGGRIQLYVARDDLPEGVYNEQFKKWDLGDILGAKGKLFKTKTGELSIHCTELRLLTKALRPLPDKFHGLQDQEARYRQRYLDLISNDESRNTFKVRSQILSGIRQFMVNRGFMEVETPMMQVIPGGAAARPFITHHNALDLDMYLRIAPELYLKRLVVGGFERVFEINRNFRNEGISVRHNPEFTMMELYMAYADYKDLIELTESLFRTLAQNILGKTEVTYGDVTLDFGKPFEKLTMREAIKKYRPETDMADLDNFDSAKAIAESIGIHVEKSWGLGRIVTEIFEEVAEAHLIQPTFITEYPAEVSPLARRNDVNPEITDRFEFFIGGREIGNGFSELNDAEDQAQRFLDQVAAKDAGDDEAMFYDEDYVTALEHGLPPTAGLGIGIDRMVMLFTNSHTIRDVILFPAMRPVK.

The Mg(2+) site is built by Glu415 and Glu422.

This sequence belongs to the class-II aminoacyl-tRNA synthetase family. Homodimer. Mg(2+) serves as cofactor.

It localises to the cytoplasm. It catalyses the reaction tRNA(Lys) + L-lysine + ATP = L-lysyl-tRNA(Lys) + AMP + diphosphate. This is Lysine--tRNA ligase from Shigella dysenteriae serotype 1 (strain Sd197).